A 451-amino-acid chain; its full sequence is ATP-dependent protease ATPase subunit HslU (451 aa).

Residues I26, 68–73 (GVGKTE), D263, E328, and R400 contribute to the ATP site.

Belongs to the ClpX chaperone family. HslU subfamily. A double ring-shaped homohexamer of HslV is capped on each side by a ring-shaped HslU homohexamer. The assembly of the HslU/HslV complex is dependent on binding of ATP.

Its subcellular location is the cytoplasm. Its function is as follows. ATPase subunit of a proteasome-like degradation complex; this subunit has chaperone activity. The binding of ATP and its subsequent hydrolysis by HslU are essential for unfolding of protein substrates subsequently hydrolyzed by HslV. HslU recognizes the N-terminal part of its protein substrates and unfolds these before they are guided to HslV for hydrolysis. This chain is ATP-dependent protease ATPase subunit HslU, found in Dichelobacter nodosus (strain VCS1703A).